The primary structure comprises 480 residues: O-acyltransferase ausP (480 aa).

Residues histidine 180 and aspartate 412 each act as proton acceptor in the active site.

The protein belongs to the plant acyltransferase family. Monomer.

It functions in the pathway secondary metabolite biosynthesis; terpenoid biosynthesis. In terms of biological role, O-acyltransferase; part of the gene cluster that mediates the biosynthesis of calidodehydroaustin, a fungal meroterpenoid. The first step of the pathway is the synthesis of 3,5-dimethylorsellinic acid by the polyketide synthase ausA. 3,5-dimethylorsellinic acid is then prenylated by the polyprenyl transferase ausN. Further epoxidation by the FAD-dependent monooxygenase ausM and cyclization by the probable terpene cyclase ausL lead to the formation of protoaustinoid A. Protoaustinoid A is then oxidized to spiro-lactone preaustinoid A3 by the combined action of the FAD-binding monooxygenases ausB and ausC, and the dioxygenase ausE. Acid-catalyzed keto-rearrangement and ring contraction of the tetraketide portion of preaustinoid A3 by ausJ lead to the formation of preaustinoid A4. The aldo-keto reductase ausK, with the help of ausH, is involved in the next step by transforming preaustinoid A4 into isoaustinone which is in turn hydroxylated by the P450 monooxygenase ausI to form austinolide. The cytochrome P450 monooxygenase ausG modifies austinolide to austinol. Austinol is further acetylated to austin by the O-acetyltransferase ausP, which spontaneously changes to dehydroaustin. The cytochrome P450 monooxygenase ausR then converts dehydroaustin is into 7-dehydrodehydroaustin. The hydroxylation catalyzed by ausR permits the O-acetyltransferase ausQ to add an additional acetyl group to the molecule, leading to the formation of acetoxydehydroaustin. The short chain dehydrogenase ausT catalyzes the reduction of the double bond present between carbon atoms 1 and 2 to convert 7-dehydrodehydroaustin into 1,2-dihydro-7-hydroxydehydroaustin. AusQ catalyzes not only an acetylation reaction but also the addition of the PKS ausV diketide product to 1,2-dihydro-7-hydroxydehydroaustin, forming precalidodehydroaustin. Finally, the iron/alpha-ketoglutarate-dependent dioxygenase converts precalidodehydroaustin into calidodehydroaustin. This is O-acyltransferase ausP from Aspergillus calidoustus.